A 1208-amino-acid chain; its full sequence is Defective chorion protein, FC125 isoform (1208 aa).

Residues 1–19 form the signal peptide; that stretch reads MRLFSLLPLLALLVVQAAG. 3 disordered regions span residues 23-60, 184-212, and 268-294; these read VTSD…PSIN, APAP…PDAP, and PAQP…EDPY. A compositionally biased stretch (polar residues) spans 32–41; sequence AGSTTNSTTD. Residues 268 to 280 show a composition bias toward low complexity; the sequence is PAQPAAAGTDAQA. A run of 5 repeats spans residues 493–518, 519–544, 545–570, 571–596, and 597–622. The tract at residues 493 to 788 is 12 X 26 AA approximate tandem repeats, Glu, Met-rich; it reads QNPMMMQQRQ…IQQQQRQMMQ (296 aa). The 6; approximate repeat unit spans residues 623–652; the sequence is QNPMMMQQRQWSEEQAKIQHDQQMAQQMAQ. One copy of the 7; approximate repeat lies at 653-680; sequence QGLMMTEQRQRQWSEDQAKIQQAQQMAQ. The stretch at 681–696 is one 8; approximate repeat; that stretch reads QTPMMMPQMQQRQWTE. One copy of the 9; approximate repeat lies at 697–720; it reads DPQMVQQMQQRQWAEDQTRMQMAQ. Residues 721-733 form a 10; approximate repeat; sequence QNPMMQQQRQMAE. An 11; approximate repeat occupies 734 to 758; sequence NPQMMQQRQWSEEQTKIEQAQQMAQ. A 12; approximate repeat occupies 759-788; that stretch reads QNQMMMQQMQQRQWSEDQAQIQQQQRQMMQ. Acidic residues predominate over residues 828-839; sequence EDEDNKAEDDLV. Disordered stretches follow at residues 828–875, 944–1010, and 1114–1208; these read EDED…SKSA, RTIN…GSIF, and VQPP…DVDD. Positions 957–977 are enriched in polar residues; sequence SESQKSNSNPPTTLTPAPQEQ. Acidic residues-rich tracts occupy residues 1163–1178 and 1194–1208; these read PEPD…EPSE and NDID…DVDD.

It is found in the secreted. Required for proper assembly of the eggshell. The protein is Defective chorion protein, FC125 isoform of Drosophila melanogaster (Fruit fly).